Reading from the N-terminus, the 217-residue chain is UPF0502 protein ESA_02280 (217 aa).

This sequence belongs to the UPF0502 family.

The chain is UPF0502 protein ESA_02280 from Cronobacter sakazakii (strain ATCC BAA-894) (Enterobacter sakazakii).